A 292-amino-acid chain; its full sequence is Putative rRNA 2'-O-methyltransferase fibrillarin 3 (292 aa).

The segment at 1-58 (MKPPQRGRGGGVRGGRGLARGGEGSAVRGSGRGGESGRGRGPGRVKSESDGGIKGGSK) is disordered. The span at 7-42 (GRGGGVRGGRGLARGGEGSAVRGSGRGGESGRGRGP) shows a compositional bias: gly residues. Residues 146-147 (YT), 165-166 (EH), 190-191 (DA), and 210-213 (DVNH) contribute to the S-adenosyl-L-methionine site.

This sequence belongs to the methyltransferase superfamily. Fibrillarin family. Component of box C/D small nucleolar ribonucleoprotein (snoRNP) particles. In terms of tissue distribution, not detectable by RT-PCR.

The protein localises to the nucleus. It is found in the nucleolus. It catalyses the reaction L-glutaminyl-[histone H2A] + S-adenosyl-L-methionine = N(5)-methyl-L-glutaminyl-[histone H2A] + S-adenosyl-L-homocysteine + H(+). Functionally, S-adenosyl-L-methionine-dependent methyltransferase that has the ability to methylate both RNAs and proteins. Involved in pre-rRNA processing. Utilizes the methyl donor S-adenosyl-L-methionine to catalyze the site-specific 2'-hydroxyl methylation of ribose moieties in pre-ribosomal RNA. Site specificity is provided by a guide RNA that base pairs with the substrate. Methylation occurs at a characteristic distance from the sequence involved in base pairing with the guide RNA. Also acts as a protein methyltransferase by mediating methylation of 'Gln-105' of histone H2A (H2AQ105me), a modification that impairs binding of the FACT complex and is specifically present at 35S ribosomal DNA locus. In Arabidopsis thaliana (Mouse-ear cress), this protein is Putative rRNA 2'-O-methyltransferase fibrillarin 3 (FIB3).